Consider the following 205-residue polypeptide: Outer-membrane lipoprotein LolB (205 aa).

Residues 1–17 (MRLRLFLAASALALLSG) form the signal peptide. Cys18 carries N-palmitoyl cysteine lipidation. Cys18 carries S-diacylglycerol cysteine lipidation.

It belongs to the LolB family. In terms of assembly, monomer.

It is found in the cell outer membrane. Its function is as follows. Plays a critical role in the incorporation of lipoproteins in the outer membrane after they are released by the LolA protein. This chain is Outer-membrane lipoprotein LolB, found in Pseudomonas paraeruginosa (strain DSM 24068 / PA7) (Pseudomonas aeruginosa (strain PA7)).